Here is a 202-residue protein sequence, read N- to C-terminus: Small ribosomal subunit protein uS4c (202 aa).

In terms of domain architecture, S4 RNA-binding spans methionine 90 to isoleucine 153.

This sequence belongs to the universal ribosomal protein uS4 family. As to quaternary structure, part of the 30S ribosomal subunit. Contacts protein S5. The interaction surface between S4 and S5 is involved in control of translational fidelity.

The protein localises to the plastid. Its subcellular location is the chloroplast. In terms of biological role, one of the primary rRNA binding proteins, it binds directly to 16S rRNA where it nucleates assembly of the body of the 30S subunit. Functionally, with S5 and S12 plays an important role in translational accuracy. This is Small ribosomal subunit protein uS4c (rps4) from Catharomnion ciliatum (Moss).